A 487-amino-acid polypeptide reads, in one-letter code: Glutamyl-tRNA(Gln) amidotransferase subunit A (487 aa).

Active-site charge relay system residues include Lys79 and Ser154. Ser178 serves as the catalytic Acyl-ester intermediate.

Belongs to the amidase family. GatA subfamily. As to quaternary structure, heterotrimer of A, B and C subunits.

The enzyme catalyses L-glutamyl-tRNA(Gln) + L-glutamine + ATP + H2O = L-glutaminyl-tRNA(Gln) + L-glutamate + ADP + phosphate + H(+). Its function is as follows. Allows the formation of correctly charged Gln-tRNA(Gln) through the transamidation of misacylated Glu-tRNA(Gln) in organisms which lack glutaminyl-tRNA synthetase. The reaction takes place in the presence of glutamine and ATP through an activated gamma-phospho-Glu-tRNA(Gln). The protein is Glutamyl-tRNA(Gln) amidotransferase subunit A of Heliobacterium modesticaldum (strain ATCC 51547 / Ice1).